Consider the following 358-residue polypeptide: Aurora kinase (358 aa).

A disordered region spans residues 1 to 49 (MENKATLARNIGEKRVSPRSKVNGTGKSWRISYSPQRMDGVSSGRNVSK). A compositionally biased stretch (polar residues) spans 20 to 35 (SKVNGTGKSWRISYSP). The Protein kinase domain occupies 100-358 (FEVGRKLGKG…PWILKNKPFW (259 aa)). ATP-binding positions include 106–114 (LGKGKFGKV) and lysine 129. The active-site Proton acceptor is aspartate 223.

The protein belongs to the protein kinase superfamily. Ser/Thr protein kinase family. Aurora subfamily.

It localises to the nucleus. The protein resides in the cytoplasm. Its subcellular location is the cytoskeleton. The protein localises to the spindle. It is found in the chromosome. It localises to the centromere. The protein resides in the kinetochore. The enzyme catalyses L-seryl-[protein] + ATP = O-phospho-L-seryl-[protein] + ADP + H(+). The catalysed reaction is L-threonyl-[protein] + ATP = O-phospho-L-threonyl-[protein] + ADP + H(+). Functionally, component of the chromosomal passenger complex (CPC), a complex that acts as a key regulator of chromosome segregation and cytokinesis. Has a role in error-correction of aberrent kinetochore-microtubule attachments to ensure that sister kinetochores become bioriented and connect to opposite poles by promoting spindle assembly checkpoint signaling. In Candida glabrata (strain ATCC 2001 / BCRC 20586 / JCM 3761 / NBRC 0622 / NRRL Y-65 / CBS 138) (Yeast), this protein is Aurora kinase (IPL1).